The primary structure comprises 150 residues: MKNNINILLINGPNLNLLGTRETEIYGDITLPDLLKNLEKRAKKLNMSLKHIQSNAEHVLIDKIHSSRKNINYIIINPAAFTHTSIAIRDALIAVEIPFIEIHISNIYSREDFRSHSWLSDISQGVICGLGLDGYHWALETISNRLIHLK.

The Proton acceptor role is filled by Tyr26. 3 residues coordinate substrate: Asn77, His83, and Asp90. Catalysis depends on His103, which acts as the Proton donor. Substrate is bound by residues 104–105 and Arg114; that span reads IS.

This sequence belongs to the type-II 3-dehydroquinase family. In terms of assembly, homododecamer.

It carries out the reaction 3-dehydroquinate = 3-dehydroshikimate + H2O. The protein operates within metabolic intermediate biosynthesis; chorismate biosynthesis; chorismate from D-erythrose 4-phosphate and phosphoenolpyruvate: step 3/7. Its function is as follows. Catalyzes a trans-dehydration via an enolate intermediate. In Buchnera aphidicola subsp. Acyrthosiphon pisum (strain 5A), this protein is 3-dehydroquinate dehydratase.